Reading from the N-terminus, the 40-residue chain is U4-ctenitoxin-Co1c (40 aa).

4 cysteine pairs are disulfide-bonded: cysteine 3–cysteine 20, cysteine 10–cysteine 26, cysteine 19–cysteine 40, and cysteine 28–cysteine 38.

As to expression, expressed by the venom gland.

The protein localises to the secreted. In terms of biological role, not toxic to mice by intracerebroventricular injection. In Ctenus ornatus (Brazilian spider), this protein is U4-ctenitoxin-Co1c.